A 393-amino-acid polypeptide reads, in one-letter code: MNLSATEKDLMIVNMGPHHPSMHGVLRLIVTLDGEDVVDCEPILGYLHRGMEKIAENRTIIQYLPYVTRWDYLATMFTEAITVNGPEQLGNIQVPKRASYIRVIMLELSRIASHLLWLGPFMADIGAQTPFFYIFRERELVYDLFEAATGMRMMHNYFRIGGVAADLPYGWLDKCLDFCDYFLTGIVEYQKLITRNPIFLERVEGIGVIGGEEAINWGLSGPMLRASGIKWDLRKVDHYECYDEFDWEIQWQKEGDSLARYLVRISEMTESIKIIQQALEGIPGGPYENLEIRCFDRERDPEWNDFEYRFISKKPSPTFELPRQELYARMEAPKGELGIFLIGDQSGFPWRWKIRPPGFINLQILPQLVKRMKLADIMTILGSIDIIMGEVDR.

It belongs to the complex I 49 kDa subunit family. NDH is composed of at least 16 different subunits, 5 of which are encoded in the nucleus.

It is found in the plastid. The protein localises to the chloroplast thylakoid membrane. The enzyme catalyses a plastoquinone + NADH + (n+1) H(+)(in) = a plastoquinol + NAD(+) + n H(+)(out). The catalysed reaction is a plastoquinone + NADPH + (n+1) H(+)(in) = a plastoquinol + NADP(+) + n H(+)(out). NDH shuttles electrons from NAD(P)H:plastoquinone, via FMN and iron-sulfur (Fe-S) centers, to quinones in the photosynthetic chain and possibly in a chloroplast respiratory chain. The immediate electron acceptor for the enzyme in this species is believed to be plastoquinone. Couples the redox reaction to proton translocation, and thus conserves the redox energy in a proton gradient. This chain is NAD(P)H-quinone oxidoreductase subunit H, chloroplastic, found in Gossypium hirsutum (Upland cotton).